The following is a 337-amino-acid chain: Biotin synthase (337 aa).

The region spanning Ala-52–Arg-281 is the Radical SAM core domain. The [4Fe-4S] cluster site is built by Cys-67, Cys-71, and Cys-74. The [2Fe-2S] cluster site is built by Cys-112, Cys-144, Cys-204, and Arg-276.

It belongs to the radical SAM superfamily. Biotin synthase family. Homodimer. [4Fe-4S] cluster is required as a cofactor. [2Fe-2S] cluster serves as cofactor.

The catalysed reaction is (4R,5S)-dethiobiotin + (sulfur carrier)-SH + 2 reduced [2Fe-2S]-[ferredoxin] + 2 S-adenosyl-L-methionine = (sulfur carrier)-H + biotin + 2 5'-deoxyadenosine + 2 L-methionine + 2 oxidized [2Fe-2S]-[ferredoxin]. It participates in cofactor biosynthesis; biotin biosynthesis; biotin from 7,8-diaminononanoate: step 2/2. Its function is as follows. Catalyzes the conversion of dethiobiotin (DTB) to biotin by the insertion of a sulfur atom into dethiobiotin via a radical-based mechanism. This chain is Biotin synthase, found in Methylobacterium radiotolerans (strain ATCC 27329 / DSM 1819 / JCM 2831 / NBRC 15690 / NCIMB 10815 / 0-1).